The primary structure comprises 53 residues: Weak toxin NWT (53 aa).

3 disulfide bridges follow: Cys-6–Cys-11, Cys-17–Cys-33, and Cys-37–Cys-48.

It belongs to the three-finger toxin family. Ancestral subfamily. Orphan group II sub-subfamily. In terms of tissue distribution, expressed by the venom gland.

It is found in the secreted. In terms of biological role, binds with low affinity and weakly inhibits muscle nicotinic acetylcholine receptor (nAChR). In Naja kaouthia (Monocled cobra), this protein is Weak toxin NWT.